Consider the following 211-residue polypeptide: Thiamine-phosphate synthase (211 aa).

Residues 35–39 (QLRDK) and asparagine 67 each bind 4-amino-2-methyl-5-(diphosphooxymethyl)pyrimidine. Mg(2+) contacts are provided by aspartate 68 and aspartate 87. Serine 106 provides a ligand contact to 4-amino-2-methyl-5-(diphosphooxymethyl)pyrimidine. 2-[(2R,5Z)-2-carboxy-4-methylthiazol-5(2H)-ylidene]ethyl phosphate is bound at residue 132–134 (TGS). A 4-amino-2-methyl-5-(diphosphooxymethyl)pyrimidine-binding site is contributed by lysine 135. 2-[(2R,5Z)-2-carboxy-4-methylthiazol-5(2H)-ylidene]ethyl phosphate contacts are provided by residues glycine 163 and 183–184 (IS).

This sequence belongs to the thiamine-phosphate synthase family. The cofactor is Mg(2+).

It carries out the reaction 2-[(2R,5Z)-2-carboxy-4-methylthiazol-5(2H)-ylidene]ethyl phosphate + 4-amino-2-methyl-5-(diphosphooxymethyl)pyrimidine + 2 H(+) = thiamine phosphate + CO2 + diphosphate. The enzyme catalyses 2-(2-carboxy-4-methylthiazol-5-yl)ethyl phosphate + 4-amino-2-methyl-5-(diphosphooxymethyl)pyrimidine + 2 H(+) = thiamine phosphate + CO2 + diphosphate. It catalyses the reaction 4-methyl-5-(2-phosphooxyethyl)-thiazole + 4-amino-2-methyl-5-(diphosphooxymethyl)pyrimidine + H(+) = thiamine phosphate + diphosphate. The protein operates within cofactor biosynthesis; thiamine diphosphate biosynthesis; thiamine phosphate from 4-amino-2-methyl-5-diphosphomethylpyrimidine and 4-methyl-5-(2-phosphoethyl)-thiazole: step 1/1. Functionally, condenses 4-methyl-5-(beta-hydroxyethyl)thiazole monophosphate (THZ-P) and 2-methyl-4-amino-5-hydroxymethyl pyrimidine pyrophosphate (HMP-PP) to form thiamine monophosphate (TMP). The polypeptide is Thiamine-phosphate synthase (Methanoculleus marisnigri (strain ATCC 35101 / DSM 1498 / JR1)).